A 494-amino-acid chain; its full sequence is MFTMDDLNQMDTQTLTDTLGSIFEHSSWIAERSAALRPFSSLSDLHRKMTGIVKAADRETQLDLIKKHPRLGTKKTMSDDSVREQQNAGLGKLEQQEYEEFLMLNEHYYDRFGFPFILAVKGKTKQDIHQALLARLESERETEFQQALIEIYRIARFRLADIITEKGETQMKRTMSYGKGNVFAYRTYLKPLTGVKQIPESSFAGRDNTVVGVDVTCEIGGEAFLPSFTDGDNTLVVATDSMKNFIQRHLASYEGTTTEGFLHYVAHRFLDTYSHMDTITLTGEDIPFEAMPAYEEKELSTSRLVFRRSRNERSRSVLKAERSGNTITITEQYSEIMDLQLVKVSGNSFVGFIRDEYTTLPEDGNRPLFVYLNISWQYENTNDSYASDPARYVAAEQVRDLASTVFHELETPSIQNLIYHIGCRILARFPQLTDVSFQSQNHTWDTVVEEIPGSKGKVYTEPRPPYGFQHFTVTREDAEKEKQKAAEKCRSLKA.

The segment at 1-174 (MFTMDDLNQM…EKGETQMKRT (174 aa)) is OHCU decarboxylase. Residue His-68 is the Proton donor; for OHCU decarboxylase activity of the active site. 5-hydroxy-2-oxo-4-ureido-2,5-dihydro-1H-imidazole-5-carboxylate contacts are provided by residues Pro-69, 81–85 (SVREQ), and 116–120 (FILAV). Positions 175 to 494 (MSYGKGNVFA…AAEKCRSLKA (320 aa)) are urate oxidase. Residue Lys-179 is the Charge relay system; for urate oxidase activity of the active site. Lys-190 (charge relay system) is an active-site residue. Thr-239 acts as the Charge relay system; for urate oxidase activity in catalysis. Residues Thr-239, Asp-240, Phe-349, Arg-366, Ile-414, Gln-415, and Asn-441 each coordinate urate.

The protein in the N-terminal section; belongs to the OHCU decarboxylase family. It in the C-terminal section; belongs to the uricase family.

It carries out the reaction 5-hydroxy-2-oxo-4-ureido-2,5-dihydro-1H-imidazole-5-carboxylate + H(+) = (S)-allantoin + CO2. It catalyses the reaction urate + O2 + H2O = 5-hydroxyisourate + H2O2. It participates in purine metabolism; urate degradation; (S)-allantoin from urate: step 1/3. It functions in the pathway purine metabolism; urate degradation; (S)-allantoin from urate: step 3/3. Catalyzes two steps in the degradation of uric acid, i.e. the oxidation of uric acid to 5-hydroxyisourate (HIU) and the stereoselective decarboxylation of 2-oxo-4-hydroxy-4-carboxy-5-ureidoimidazoline (OHCU) to (S)-allantoin. The chain is Uric acid degradation bifunctional protein PucL (pucL) from Bacillus subtilis (strain 168).